The following is a 185-amino-acid chain: Elongation factor P (185 aa).

This sequence belongs to the elongation factor P family.

Its subcellular location is the cytoplasm. Its pathway is protein biosynthesis; polypeptide chain elongation. In terms of biological role, involved in peptide bond synthesis. Stimulates efficient translation and peptide-bond synthesis on native or reconstituted 70S ribosomes in vitro. Probably functions indirectly by altering the affinity of the ribosome for aminoacyl-tRNA, thus increasing their reactivity as acceptors for peptidyl transferase. The polypeptide is Elongation factor P (Pelotomaculum thermopropionicum (strain DSM 13744 / JCM 10971 / SI)).